Here is a 702-residue protein sequence, read N- to C-terminus: Ribosomal RNA large subunit methyltransferase K/L (702 aa).

In terms of domain architecture, THUMP spans 43-154; the sequence is LIYQSLMWSR…KETASIALDL (112 aa).

This sequence belongs to the methyltransferase superfamily. RlmKL family.

The protein localises to the cytoplasm. It carries out the reaction guanosine(2445) in 23S rRNA + S-adenosyl-L-methionine = N(2)-methylguanosine(2445) in 23S rRNA + S-adenosyl-L-homocysteine + H(+). It catalyses the reaction guanosine(2069) in 23S rRNA + S-adenosyl-L-methionine = N(2)-methylguanosine(2069) in 23S rRNA + S-adenosyl-L-homocysteine + H(+). Its function is as follows. Specifically methylates the guanine in position 2445 (m2G2445) and the guanine in position 2069 (m7G2069) of 23S rRNA. This Salmonella arizonae (strain ATCC BAA-731 / CDC346-86 / RSK2980) protein is Ribosomal RNA large subunit methyltransferase K/L.